Reading from the N-terminus, the 188-residue chain is Elongation factor P (188 aa).

At Lys-34 the chain carries N6-(3,6-diaminohexanoyl)-5-hydroxylysine.

The protein belongs to the elongation factor P family. May be beta-lysylated on the epsilon-amino group of Lys-34 by the combined action of EpmA and EpmB, and then hydroxylated on the C5 position of the same residue by EpmC (if this protein is present). Lysylation is critical for the stimulatory effect of EF-P on peptide-bond formation. The lysylation moiety may extend toward the peptidyltransferase center and stabilize the terminal 3-CCA end of the tRNA. Hydroxylation of the C5 position on Lys-34 may allow additional potential stabilizing hydrogen-bond interactions with the P-tRNA.

It is found in the cytoplasm. It participates in protein biosynthesis; polypeptide chain elongation. Involved in peptide bond synthesis. Alleviates ribosome stalling that occurs when 3 or more consecutive Pro residues or the sequence PPG is present in a protein, possibly by augmenting the peptidyl transferase activity of the ribosome. Modification of Lys-34 is required for alleviation. This chain is Elongation factor P, found in Xanthomonas campestris pv. campestris (strain B100).